The sequence spans 424 residues: Probable serine/threonine-protein kinase PBL12 (424 aa).

Residues 88 to 368 (FSRSNMLGEG…CEVVKVLESI (281 aa)) form the Protein kinase domain. ATP contacts are provided by residues 94–102 (LGEGGFGPV) and Lys123. The Proton acceptor role is filled by Asp218.

Belongs to the protein kinase superfamily. Ser/Thr protein kinase family. Expressed specifically in roots.

It is found in the cell membrane. It carries out the reaction L-seryl-[protein] + ATP = O-phospho-L-seryl-[protein] + ADP + H(+). It catalyses the reaction L-threonyl-[protein] + ATP = O-phospho-L-threonyl-[protein] + ADP + H(+). Functionally, may play a role in the signal transduction pathway of osmotic stress. May be involved in plant defense signaling. The sequence is that of Probable serine/threonine-protein kinase PBL12 from Arabidopsis thaliana (Mouse-ear cress).